The chain runs to 395 residues: F-box/kelch-repeat protein At3g13680 (395 aa).

The F-box domain occupies 1–47 (MTTMGDLPGDLVEEILSRVPLTSLRAIRSTCQKWNSLSKSQICGRKA). Kelch repeat units lie at residues 154-202 (ILRI…SLKG), 210-256 (KKET…VSLA), 265-314 (VLYQ…FIDE), and 337-383 (IVYI…LVQL).

This is F-box/kelch-repeat protein At3g13680 from Arabidopsis thaliana (Mouse-ear cress).